The following is a 174-amino-acid chain: Cathepsin B-like cysteine proteinase 3 (174 aa).

2 disulfides stabilise this stretch: Cys22-Cys55 and Cys30-Cys42. Active-site residues include His122 and Asn142.

It belongs to the peptidase C1 family.

Its function is as follows. Expression of the protease correlates with blood-feeding and suggests a role for the protease in blood digestion. This chain is Cathepsin B-like cysteine proteinase 3 (CP-3), found in Ostertagia ostertagi (Brown stomach worm).